The following is a 135-amino-acid chain: uncharacterized protein (135 aa).

This is an uncharacterized protein from Archaeoglobus fulgidus (strain ATCC 49558 / DSM 4304 / JCM 9628 / NBRC 100126 / VC-16).